We begin with the raw amino-acid sequence, 245 residues long: 1-(5-phosphoribosyl)-5-[(5-phosphoribosylamino)methylideneamino] imidazole-4-carboxamide isomerase (245 aa).

The active-site Proton acceptor is D8. D131 (proton donor) is an active-site residue.

This sequence belongs to the HisA/HisF family.

The protein localises to the cytoplasm. It carries out the reaction 1-(5-phospho-beta-D-ribosyl)-5-[(5-phospho-beta-D-ribosylamino)methylideneamino]imidazole-4-carboxamide = 5-[(5-phospho-1-deoxy-D-ribulos-1-ylimino)methylamino]-1-(5-phospho-beta-D-ribosyl)imidazole-4-carboxamide. Its pathway is amino-acid biosynthesis; L-histidine biosynthesis; L-histidine from 5-phospho-alpha-D-ribose 1-diphosphate: step 4/9. In Neisseria meningitidis serogroup C (strain 053442), this protein is 1-(5-phosphoribosyl)-5-[(5-phosphoribosylamino)methylideneamino] imidazole-4-carboxamide isomerase.